A 619-amino-acid chain; its full sequence is Chaperone protein HscA homolog (619 aa).

The protein belongs to the heat shock protein 70 family.

In terms of biological role, chaperone involved in the maturation of iron-sulfur cluster-containing proteins. Has a low intrinsic ATPase activity which is markedly stimulated by HscB. This is Chaperone protein HscA homolog from Shewanella denitrificans (strain OS217 / ATCC BAA-1090 / DSM 15013).